The sequence spans 652 residues: MLDTIARALQDLGRQVLPTLPSLSQEEVSIIWGNVSEFVRRQLTLHKGVQIPAFGTFTFIRQKLEVGNNKFILIQRPVFIMVEKLVQIHGLKQNKVYTPGEIPIVPLNFVMISLEGPFNRDVVEGCVKETLLFLSRSISMKQNVEFTFKGIGVLMIRDSKVKMRFYKDFLCTMDGSGALAKALANRPGTVDSVLSSREALRKWPSSVLAFPRIELKEMENKLPMETLVEECGENRERKCKLKDQSDKEEGTRDISSPKRLRDRQALFPAKVTNVSLLEKFERSESGGKIMTPESLSYPSCLKHDSEMKPQTSPACQDHNKAGQEMCYVCLQRAQRNSLLYYSEERRREIEDERLIQQYQMLKDQEALFRHQMKSLATREQNQKNAAYNLGVAEAIRNHKNEKPEFYKSFLFDKRPLSPALNALKQEEYSRSLLKQMDNRQENEIKQRQYRELMDRLEQVQLTEELAAQRAKFLKDKMEETQCYKRALDAQIKNKPSRLPPFEPDSSEPIFGKNEGELMVEKQKREQNYMKHQLEAAANHKRKAILHQLVDQRRDLQMLQRTQREHLADRTAELERVNRVNQCLQEDWERSAAMKKQRDLEDKAFERASDKLFLLDQCEKYRRCKQCQRRTSNVGESNLWPLNKFLPGSRLLV.

A Phosphoserine modification is found at Ser206. Residues 238 to 256 (KCKLKDQSDKEEGTRDISS) are compositionally biased toward basic and acidic residues. The interval 238-258 (KCKLKDQSDKEEGTRDISSPK) is disordered. 3 positions are modified to phosphoserine: Ser275, Ser296, and Ser417. The stretch at 436-493 (MDNRQENEIKQRQYRELMDRLEQVQLTEELAAQRAKFLKDKMEETQCYKRALDAQIKN) forms a coiled coil.

The protein localises to the cytoplasm. Its subcellular location is the cytoskeleton. It localises to the microtubule organizing center. It is found in the centrosome. This chain is Coiled-coil domain-containing protein 81 (CCDC81), found in Homo sapiens (Human).